Here is a 506-residue protein sequence, read N- to C-terminus: Serine/threonine-protein kinase RIO1 (506 aa).

The segment at 22–52 (TASSSSDDEPEQAVVKQEKLEAGEQIEEQYD) is disordered. One can recognise a Protein kinase domain in the interval 142 to 506 (LNIDGCISTG…KKRAHRQHMK (365 aa)). Residues 148-156 (ISTGKEANV), Lys-169, and Leu-241 contribute to the ATP site. Asp-285 serves as the catalytic Proton acceptor. Asn-290 is a binding site for ATP. Residues Asn-290 and Asp-302 each coordinate Mg(2+). The active-site 4-aspartylphosphate intermediate is the Asp-302. A disordered region spans residues 418-506 (GDGFGEEHDD…KKRAHRQHMK (89 aa)). The span at 424–435 (EHDDSDDNDDEE) shows a compositional bias: acidic residues. Over residues 454–490 (EKERKIAMHTRNREETAEERKERKAAVKEEKREQRKE) the composition is skewed to basic and acidic residues. Basic residues predominate over residues 491-506 (KIPKHLKKRAHRQHMK).

The protein belongs to the protein kinase superfamily. RIO-type Ser/Thr kinase family. It depends on Mg(2+) as a cofactor. In terms of tissue distribution, expressed in vulva and uterine cells, uterine seam cells (utse), spermatheca and in the nervous system including chemosensory neurons in the head, nerve ring neurons (RID/RIF), inhibitory motor neurons (DA/DD/VA/VD), mechanosensory neurons (ALML/PLML) and tail sensory neurons (DVA//PDA). Also expressed in intestine and pharynx (procorpus) and rectal valve and gland.

It is found in the cytoplasm. The catalysed reaction is L-seryl-[protein] + ATP = O-phospho-L-seryl-[protein] + ADP + H(+). It carries out the reaction L-threonyl-[protein] + ATP = O-phospho-L-threonyl-[protein] + ADP + H(+). In terms of biological role, involved in the final steps of cytoplasmic maturation of the 40S ribosomal subunit. Despite the protein kinase domain is proposed to act predominantly as an ATPase. The catalytic activity regulates its dynamic association with the 40S subunit. Plays a role in oogenesis by regulating germ cell proliferation, progression through diplotene and diakinesis stages and oocyte maturation. Regulates germline development probably by regulating the phosphorylation of mpk-1. Involved in larval development. In Caenorhabditis elegans, this protein is Serine/threonine-protein kinase RIO1.